The sequence spans 460 residues: GTPase Der (460 aa).

EngA-type G domains lie at 2–164 and 196–368; these read QSII…HEEF and IRVG…ENFT. GTP is bound by residues 8-15, 55-59, 116-119, 202-209, 249-253, and 313-316; these read GKPNVGKS, DSGGL, NKVD, GRVNVGKS, DTAGI, and NKWD. The region spanning 369–453 is the KH-like domain; it reads QKIQTSKLNT…PLVIASRKKG (85 aa).

This sequence belongs to the TRAFAC class TrmE-Era-EngA-EngB-Septin-like GTPase superfamily. EngA (Der) GTPase family. As to quaternary structure, associates with the 50S ribosomal subunit.

Its function is as follows. GTPase that plays an essential role in the late steps of ribosome biogenesis. The protein is GTPase Der of Campylobacter jejuni subsp. jejuni serotype O:6 (strain 81116 / NCTC 11828).